Here is a 556-residue protein sequence, read N- to C-terminus: Innexin-7 (556 aa).

3 helical membrane-spanning segments follow: residues 21 to 41 (LVAS…AVLI), 127 to 147 (FFLL…KYFA), and 213 to 233 (AYYV…NVIL). A glycan (N-linked (GlcNAc...) asparagine) is linked at Asn-267. A helical transmembrane segment spans residues 310 to 330 (IFVFLWAWYILLTAFTVGNLF). The segment at 431-556 (DESQVESGKN…IPKTAEKKHW (126 aa)) is disordered. Residues 435-447 (VESGKNTAPSTSH) show a composition bias toward polar residues. The span at 452–461 (RGTEQLEKNV) shows a compositional bias: basic and acidic residues. The span at 463–474 (SRQGSLSTQLRP) shows a compositional bias: polar residues. The segment covering 500 to 513 (KGSKKPSPTKKKAS) has biased composition (basic residues). Low complexity predominate over residues 514 to 527 (SKNSPQSSSNSRRP). Residues 539–556 (HHHEPDSKIPKTAEKKHW) show a composition bias toward basic and acidic residues.

The protein belongs to the pannexin family.

It is found in the cell membrane. It localises to the cell junction. The protein localises to the gap junction. Functionally, structural component of the gap junctions. In Caenorhabditis elegans, this protein is Innexin-7 (inx-7).